An 86-amino-acid chain; its full sequence is Omega-theraphotoxin-Hhn1a 1 (86 aa).

The signal sequence occupies residues 1–21 (MKSIVFVALFGLALLAVVCSA). The propeptide occupies 22–50 (SEDAHKELLKEVVRAMVVDKTDAVQAEER). 3 disulfide bridges follow: C52/C66, C59/C71, and C65/C78.

It belongs to the neurotoxin 10 (Hwtx-1) family. 17 (Hntx-9) subfamily. In terms of tissue distribution, expressed by the venom gland.

It is found in the secreted. Functionally, ion channel inhibitor. The sequence is that of Omega-theraphotoxin-Hhn1a 1 from Cyriopagopus hainanus (Chinese bird spider).